We begin with the raw amino-acid sequence, 215 residues long: Large ribosomal subunit protein uL16 (215 aa).

Positions Met1–Tyr22 are disordered.

Belongs to the universal ribosomal protein uL16 family.

This chain is Large ribosomal subunit protein uL16 (RPL10), found in Tetrahymena thermophila (strain SB210).